A 247-amino-acid polypeptide reads, in one-letter code: Probable transcriptional regulatory protein Gbem_3313 (247 aa).

It belongs to the TACO1 family.

It localises to the cytoplasm. The polypeptide is Probable transcriptional regulatory protein Gbem_3313 (Citrifermentans bemidjiense (strain ATCC BAA-1014 / DSM 16622 / JCM 12645 / Bem) (Geobacter bemidjiensis)).